A 206-amino-acid chain; its full sequence is Holliday junction branch migration complex subunit RuvA (206 aa).

Positions 1 to 68 (MITFVRGMLA…EDAMQLFGFL (68 aa)) are domain I. Residues 69–147 (EPGERELFGQ…KWREESGLSA (79 aa)) are domain II. The segment at 147 to 151 (AMGAR) is flexible linker. The segment at 152 to 206 (ASSRVYEEVELALLALGFAPGEVVRALDAVAPAMAGEEQTEAWLRAAIAWLSEQG) is domain III.

The protein belongs to the RuvA family. In terms of assembly, homotetramer. Forms an RuvA(8)-RuvB(12)-Holliday junction (HJ) complex. HJ DNA is sandwiched between 2 RuvA tetramers; dsDNA enters through RuvA and exits via RuvB. An RuvB hexamer assembles on each DNA strand where it exits the tetramer. Each RuvB hexamer is contacted by two RuvA subunits (via domain III) on 2 adjacent RuvB subunits; this complex drives branch migration. In the full resolvosome a probable DNA-RuvA(4)-RuvB(12)-RuvC(2) complex forms which resolves the HJ.

Its subcellular location is the cytoplasm. Its function is as follows. The RuvA-RuvB-RuvC complex processes Holliday junction (HJ) DNA during genetic recombination and DNA repair, while the RuvA-RuvB complex plays an important role in the rescue of blocked DNA replication forks via replication fork reversal (RFR). RuvA specifically binds to HJ cruciform DNA, conferring on it an open structure. The RuvB hexamer acts as an ATP-dependent pump, pulling dsDNA into and through the RuvAB complex. HJ branch migration allows RuvC to scan DNA until it finds its consensus sequence, where it cleaves and resolves the cruciform DNA. The sequence is that of Holliday junction branch migration complex subunit RuvA from Gloeobacter violaceus (strain ATCC 29082 / PCC 7421).